The sequence spans 552 residues: Capsid protein precursor (552 aa).

The segment at 1–41 is disordered; that stretch reads MKQNDTKKTTQRRNSKKYSSKTNRGTKRAPRDQEVGTGAQE. A compositionally biased stretch (basic residues) spans 9–28; it reads TTQRRNSKKYSSKTNRGTKR.

Homodimer. The 7 kDa polypeptide is acetylated. In terms of processing, autocatalytic proteolysis releases a post-translationally modified peptide that remains associated with nucleic acid within the virion. This peptide is observed only when nucleic acid is packaged in the capsid.

It is found in the virion. Its function is as follows. The capsid protein self-assembles to form an icosahedral capsid with a T=2 symmetry made of 120 subunits. The chain is Capsid protein precursor (Segment-1) from Human picobirnavirus (strain Human/Thailand/Hy005102/-) (PBV).